The chain runs to 115 residues: Phosphoribosyl-ATP pyrophosphatase (115 aa).

This sequence belongs to the PRA-PH family.

It is found in the cytoplasm. The catalysed reaction is 1-(5-phospho-beta-D-ribosyl)-ATP + H2O = 1-(5-phospho-beta-D-ribosyl)-5'-AMP + diphosphate + H(+). Its pathway is amino-acid biosynthesis; L-histidine biosynthesis; L-histidine from 5-phospho-alpha-D-ribose 1-diphosphate: step 2/9. The chain is Phosphoribosyl-ATP pyrophosphatase from Saccharophagus degradans (strain 2-40 / ATCC 43961 / DSM 17024).